The chain runs to 351 residues: Probable dual-specificity RNA methyltransferase RlmN (351 aa).

The Proton acceptor role is filled by Glu102. A Radical SAM core domain is found at 110–339; it reads DGGRKTICIS…ILNRRSPGKD (230 aa). Cysteines 117 and 344 form a disulfide. The [4Fe-4S] cluster site is built by Cys124, Cys128, and Cys131. S-adenosyl-L-methionine is bound by residues 171-172, Ser203, 226-228, and Asn302; these read GE and SLN. Residue Cys344 is the S-methylcysteine intermediate of the active site.

This sequence belongs to the radical SAM superfamily. RlmN family. Requires [4Fe-4S] cluster as cofactor.

It localises to the cytoplasm. The enzyme catalyses adenosine(2503) in 23S rRNA + 2 reduced [2Fe-2S]-[ferredoxin] + 2 S-adenosyl-L-methionine = 2-methyladenosine(2503) in 23S rRNA + 5'-deoxyadenosine + L-methionine + 2 oxidized [2Fe-2S]-[ferredoxin] + S-adenosyl-L-homocysteine. It carries out the reaction adenosine(37) in tRNA + 2 reduced [2Fe-2S]-[ferredoxin] + 2 S-adenosyl-L-methionine = 2-methyladenosine(37) in tRNA + 5'-deoxyadenosine + L-methionine + 2 oxidized [2Fe-2S]-[ferredoxin] + S-adenosyl-L-homocysteine. Specifically methylates position 2 of adenine 2503 in 23S rRNA and position 2 of adenine 37 in tRNAs. The sequence is that of Probable dual-specificity RNA methyltransferase RlmN from Leptospira borgpetersenii serovar Hardjo-bovis (strain JB197).